The following is a 311-amino-acid chain: tRNA dimethylallyltransferase (311 aa).

Residue Gly-13–Thr-20 participates in ATP binding. Thr-15–Thr-20 contacts substrate. Interaction with substrate tRNA stretches follow at residues Asp-38–Gln-41 and Gln-166–Arg-170.

Belongs to the IPP transferase family. Monomer. Mg(2+) is required as a cofactor.

The enzyme catalyses adenosine(37) in tRNA + dimethylallyl diphosphate = N(6)-dimethylallyladenosine(37) in tRNA + diphosphate. Functionally, catalyzes the transfer of a dimethylallyl group onto the adenine at position 37 in tRNAs that read codons beginning with uridine, leading to the formation of N6-(dimethylallyl)adenosine (i(6)A). This Staphylococcus aureus (strain MSSA476) protein is tRNA dimethylallyltransferase.